A 238-amino-acid polypeptide reads, in one-letter code: Sugar fermentation stimulation protein homolog (238 aa).

It belongs to the SfsA family.

The sequence is that of Sugar fermentation stimulation protein homolog from Haemophilus influenzae (strain ATCC 51907 / DSM 11121 / KW20 / Rd).